We begin with the raw amino-acid sequence, 295 residues long: tRNA dimethylallyltransferase (295 aa).

Position 9–16 (Gly-9–Ser-16) interacts with ATP. Thr-11–Ser-16 provides a ligand contact to substrate. The interaction with substrate tRNA stretch occupies residues Asp-34 to Gln-37.

It belongs to the IPP transferase family. In terms of assembly, monomer. Requires Mg(2+) as cofactor.

The catalysed reaction is adenosine(37) in tRNA + dimethylallyl diphosphate = N(6)-dimethylallyladenosine(37) in tRNA + diphosphate. Catalyzes the transfer of a dimethylallyl group onto the adenine at position 37 in tRNAs that read codons beginning with uridine, leading to the formation of N6-(dimethylallyl)adenosine (i(6)A). The chain is tRNA dimethylallyltransferase from Nostoc sp. (strain PCC 7120 / SAG 25.82 / UTEX 2576).